The primary structure comprises 212 residues: Uracil phosphoribosyltransferase (212 aa).

5-phospho-alpha-D-ribose 1-diphosphate is bound by residues arginine 78, arginine 103, and 130 to 138; that span reads DPMLATGSS. Uracil contacts are provided by residues isoleucine 193 and 198-200; that span reads GDA. Aspartate 199 is a binding site for 5-phospho-alpha-D-ribose 1-diphosphate.

It belongs to the UPRTase family. Requires Mg(2+) as cofactor.

The catalysed reaction is UMP + diphosphate = 5-phospho-alpha-D-ribose 1-diphosphate + uracil. Its pathway is pyrimidine metabolism; UMP biosynthesis via salvage pathway; UMP from uracil: step 1/1. Its activity is regulated as follows. Allosterically activated by GTP. Catalyzes the conversion of uracil and 5-phospho-alpha-D-ribose 1-diphosphate (PRPP) to UMP and diphosphate. This chain is Uracil phosphoribosyltransferase, found in Pseudomonas fluorescens (strain SBW25).